The primary structure comprises 155 residues: Ribosomal RNA large subunit methyltransferase H (155 aa).

Residues L72, G103, and 122 to 127 (LSALTL) contribute to the S-adenosyl-L-methionine site.

Belongs to the RNA methyltransferase RlmH family. As to quaternary structure, homodimer.

The protein resides in the cytoplasm. It catalyses the reaction pseudouridine(1915) in 23S rRNA + S-adenosyl-L-methionine = N(3)-methylpseudouridine(1915) in 23S rRNA + S-adenosyl-L-homocysteine + H(+). Functionally, specifically methylates the pseudouridine at position 1915 (m3Psi1915) in 23S rRNA. This Salmonella dublin (strain CT_02021853) protein is Ribosomal RNA large subunit methyltransferase H.